Consider the following 197-residue polypeptide: Large ribosomal subunit protein bL25 (197 aa).

The protein belongs to the bacterial ribosomal protein bL25 family. CTC subfamily. In terms of assembly, part of the 50S ribosomal subunit; part of the 5S rRNA/L5/L18/L25 subcomplex. Contacts the 5S rRNA. Binds to the 5S rRNA independently of L5 and L18.

Its function is as follows. This is one of the proteins that binds to the 5S RNA in the ribosome where it forms part of the central protuberance. In Citrifermentans bemidjiense (strain ATCC BAA-1014 / DSM 16622 / JCM 12645 / Bem) (Geobacter bemidjiensis), this protein is Large ribosomal subunit protein bL25.